The primary structure comprises 331 residues: tRNA-cytidine(32) 2-sulfurtransferase (331 aa).

Residues 1-33 (MNAPHMNDTAADAATLDDAAAPAGRPALTRREQ) are disordered. Over residues 8–23 (DTAADAATLDDAAAPA) the composition is skewed to low complexity. Residues 71-76 (SGGKDS) carry the PP-loop motif motif. 3 residues coordinate [4Fe-4S] cluster: C146, C149, and C237.

It belongs to the TtcA family. In terms of assembly, homodimer. The cofactor is Mg(2+). [4Fe-4S] cluster serves as cofactor.

Its subcellular location is the cytoplasm. The catalysed reaction is cytidine(32) in tRNA + S-sulfanyl-L-cysteinyl-[cysteine desulfurase] + AH2 + ATP = 2-thiocytidine(32) in tRNA + L-cysteinyl-[cysteine desulfurase] + A + AMP + diphosphate + H(+). The protein operates within tRNA modification. In terms of biological role, catalyzes the ATP-dependent 2-thiolation of cytidine in position 32 of tRNA, to form 2-thiocytidine (s(2)C32). The sulfur atoms are provided by the cysteine/cysteine desulfurase (IscS) system. The polypeptide is tRNA-cytidine(32) 2-sulfurtransferase (Burkholderia cenocepacia (strain HI2424)).